Consider the following 413-residue polypeptide: Phosphoglycerate kinase (413 aa).

Residues 24 to 26 (DFN), arginine 39, 62 to 65 (HLSR), arginine 123, and arginine 165 each bind substrate. Residues lysine 216, glutamate 343, and 369–372 (GGDS) contribute to the ATP site.

This sequence belongs to the phosphoglycerate kinase family. Monomer.

It localises to the cytoplasm. It catalyses the reaction (2R)-3-phosphoglycerate + ATP = (2R)-3-phospho-glyceroyl phosphate + ADP. Its pathway is carbohydrate degradation; glycolysis; pyruvate from D-glyceraldehyde 3-phosphate: step 2/5. The polypeptide is Phosphoglycerate kinase (Mycoplasmoides gallisepticum (strain R(low / passage 15 / clone 2)) (Mycoplasma gallisepticum)).